An 86-amino-acid chain; its full sequence is Large ribosomal subunit protein bL27 (86 aa).

Residues 1 to 10 (MAQKKGGGST) are compositionally biased toward gly residues. Residues 1–20 (MAQKKGGGSTRNGRDSESKR) are disordered.

It belongs to the bacterial ribosomal protein bL27 family.

The chain is Large ribosomal subunit protein bL27 from Polynucleobacter necessarius subsp. necessarius (strain STIR1).